The primary structure comprises 655 residues: Macrolide export ATP-binding/permease protein MacB (655 aa).

Residues Ile6–Gln244 form the ABC transporter domain. Position 42-49 (Gly42–Ser49) interacts with ATP. 4 helical membrane-spanning segments follow: residues Phe279 to Gly299, Leu528 to Met548, Phe579 to Tyr599, and Ala618 to Leu638.

This sequence belongs to the ABC transporter superfamily. Macrolide exporter (TC 3.A.1.122) family. In terms of assembly, homodimer.

The protein localises to the cell inner membrane. In terms of biological role, non-canonical ABC transporter that contains transmembrane domains (TMD), which form a pore in the inner membrane, and an ATP-binding domain (NBD), which is responsible for energy generation. Confers resistance against macrolides. This chain is Macrolide export ATP-binding/permease protein MacB, found in Rhodopseudomonas palustris (strain BisB18).